The sequence spans 268 residues: Enoyl-[acyl-carrier-protein] reductase [NADH] 2 (268 aa).

Residues Gly14, 20–21 (SI), Gln41, 65–66 (DV), and Ile93 each bind NAD(+). Residues Tyr146 and Tyr156 each act as proton acceptor in the active site. Residues Lys163 and 192 to 196 (IRTLA) contribute to the NAD(+) site.

Belongs to the short-chain dehydrogenases/reductases (SDR) family. FabI subfamily.

The protein resides in the cell inner membrane. It carries out the reaction a 2,3-saturated acyl-[ACP] + NAD(+) = a (2E)-enoyl-[ACP] + NADH + H(+). It functions in the pathway lipid metabolism; fatty acid biosynthesis. The chain is Enoyl-[acyl-carrier-protein] reductase [NADH] 2 (fabI2) from Rhizobium meliloti (strain 1021) (Ensifer meliloti).